Reading from the N-terminus, the 74-residue chain is Exodeoxyribonuclease 7 small subunit (74 aa).

Belongs to the XseB family. Heterooligomer composed of large and small subunits.

It localises to the cytoplasm. It carries out the reaction Exonucleolytic cleavage in either 5'- to 3'- or 3'- to 5'-direction to yield nucleoside 5'-phosphates.. Bidirectionally degrades single-stranded DNA into large acid-insoluble oligonucleotides, which are then degraded further into small acid-soluble oligonucleotides. The polypeptide is Exodeoxyribonuclease 7 small subunit (Haemophilus ducreyi (strain 35000HP / ATCC 700724)).